A 475-amino-acid chain; its full sequence is Ribulose bisphosphate carboxylase large chain (475 aa).

The propeptide occupies 1 to 2 (MV). N-acetylproline is present on P3. K14 carries the post-translational modification N6,N6,N6-trimethyllysine. The substrate site is built by N123 and T173. K175 functions as the Proton acceptor in the catalytic mechanism. K177 is a binding site for substrate. K201, D203, and E204 together coordinate Mg(2+). N6-carboxylysine is present on K201. Catalysis depends on H294, which acts as the Proton acceptor. 3 residues coordinate substrate: R295, H327, and S379.

Belongs to the RuBisCO large chain family. Type I subfamily. In terms of assembly, heterohexadecamer of 8 large chains and 8 small chains. Requires Mg(2+) as cofactor.

It localises to the plastid. The protein resides in the chloroplast. It carries out the reaction 2 (2R)-3-phosphoglycerate + 2 H(+) = D-ribulose 1,5-bisphosphate + CO2 + H2O. The enzyme catalyses D-ribulose 1,5-bisphosphate + O2 = 2-phosphoglycolate + (2R)-3-phosphoglycerate + 2 H(+). Functionally, ruBisCO catalyzes two reactions: the carboxylation of D-ribulose 1,5-bisphosphate, the primary event in carbon dioxide fixation, as well as the oxidative fragmentation of the pentose substrate in the photorespiration process. Both reactions occur simultaneously and in competition at the same active site. This is Ribulose bisphosphate carboxylase large chain from Dunaliella tertiolecta (Green alga).